A 578-amino-acid chain; its full sequence is Longifolene synthase (578 aa).

The Mg(2+) site is built by aspartate 331, aspartate 335, and aspartate 475. The DDXXD motif signature appears at 331–335 (DDLYD).

It belongs to the terpene synthase family. Tpsd subfamily. Requires Mg(2+) as cofactor. Mn(2+) serves as cofactor.

It catalyses the reaction (2E,6E)-farnesyl diphosphate = longifolene + diphosphate. It functions in the pathway sesquiterpene biosynthesis. It participates in terpene metabolism; oleoresin biosynthesis. In terms of biological role, terpene synthase (TPS) involved in the biosynthesis of sesquiterpene natural products included in conifer oleoresin secretions and volatile emissions; these compounds contribute to biotic and abiotic stress defense against herbivores and pathogens. Catalyzes the conversion of (2E,6E)-farnesyl diphosphate (FPP) to longifolene. The protein is Longifolene synthase of Picea engelmannii x Picea glauca (Hybrid white spruce).